Here is a 190-residue protein sequence, read N- to C-terminus: CASP-like protein 2U1 (190 aa).

Residues 1 to 16 (MAFTSLLGSDAERKVA) lie on the Cytoplasmic side of the membrane. A helical membrane pass occupies residues 17 to 37 (VAEVALRAVLCGLGALAAALV). Residues 38-59 (ATDTQTRTFFSLQKKATYTDMK) are Extracellular-facing. Residues 60 to 80 (AMVLLVAAAAAAAGYSLLQAA) traverse the membrane as a helical segment. Over 81–100 (RCCCCVALLRTSIRPRARLL) the chain is Cytoplasmic. A helical membrane pass occupies residues 101–121 (LAWCVFACDQALAYALLAAVV). Over 122–152 (AALQASVVAKQGLPQLQWMAICALYGAFCRQ) the chain is Extracellular. Residues 153 to 173 (AGAGVACAVAAAVDAALLAFL) form a helical membrane-spanning segment. Residues 174–190 (SAFNLFRLYGAKATTTT) are Cytoplasmic-facing.

The protein belongs to the Casparian strip membrane proteins (CASP) family. As to quaternary structure, homodimer and heterodimers.

The protein localises to the cell membrane. In Zea mays (Maize), this protein is CASP-like protein 2U1.